The sequence spans 137 residues: MPPKSRASGPKKTQKSRRRDKKNVPHGNAHIKSTFNNTIVSITDPNGNVISWASSGHVGFKGSRKSTPFAAQLAAENAARKAQEHGVKKVDVFVKGPGSGRETAIRSLQAAGLEVGTISDVTPQPHNGCRPPKRRRV.

Disordered regions lie at residues 1-32 and 118-137; these read MPPK…AHIK and ISDV…RRRV. Residues 12–21 are compositionally biased toward basic residues; it reads KTQKSRRRDK.

This sequence belongs to the universal ribosomal protein uS11 family. In terms of assembly, part of the 30S ribosomal subunit. Interacts with proteins S7 and S18. Binds to IF-3.

Located on the platform of the 30S subunit, it bridges several disparate RNA helices of the 16S rRNA. Forms part of the Shine-Dalgarno cleft in the 70S ribosome. This Nocardia farcinica (strain IFM 10152) protein is Small ribosomal subunit protein uS11.